We begin with the raw amino-acid sequence, 318 residues long: 4-hydroxy-3-methylbut-2-enyl diphosphate reductase (318 aa).

C12 lines the [4Fe-4S] cluster pocket. The (2E)-4-hydroxy-3-methylbut-2-enyl diphosphate site is built by H41 and H74. Residues H41 and H74 each coordinate dimethylallyl diphosphate. Positions 41 and 74 each coordinate isopentenyl diphosphate. C96 contacts [4Fe-4S] cluster. A (2E)-4-hydroxy-3-methylbut-2-enyl diphosphate-binding site is contributed by H124. H124 is a binding site for dimethylallyl diphosphate. H124 serves as a coordination point for isopentenyl diphosphate. E126 serves as the catalytic Proton donor. T167 serves as a coordination point for (2E)-4-hydroxy-3-methylbut-2-enyl diphosphate. A [4Fe-4S] cluster-binding site is contributed by C197. (2E)-4-hydroxy-3-methylbut-2-enyl diphosphate is bound by residues S225, S226, N227, and S269. The dimethylallyl diphosphate site is built by S225, S226, N227, and S269. The isopentenyl diphosphate site is built by S225, S226, N227, and S269.

It belongs to the IspH family. [4Fe-4S] cluster is required as a cofactor.

It carries out the reaction isopentenyl diphosphate + 2 oxidized [2Fe-2S]-[ferredoxin] + H2O = (2E)-4-hydroxy-3-methylbut-2-enyl diphosphate + 2 reduced [2Fe-2S]-[ferredoxin] + 2 H(+). The catalysed reaction is dimethylallyl diphosphate + 2 oxidized [2Fe-2S]-[ferredoxin] + H2O = (2E)-4-hydroxy-3-methylbut-2-enyl diphosphate + 2 reduced [2Fe-2S]-[ferredoxin] + 2 H(+). Its pathway is isoprenoid biosynthesis; dimethylallyl diphosphate biosynthesis; dimethylallyl diphosphate from (2E)-4-hydroxy-3-methylbutenyl diphosphate: step 1/1. The protein operates within isoprenoid biosynthesis; isopentenyl diphosphate biosynthesis via DXP pathway; isopentenyl diphosphate from 1-deoxy-D-xylulose 5-phosphate: step 6/6. In terms of biological role, catalyzes the conversion of 1-hydroxy-2-methyl-2-(E)-butenyl 4-diphosphate (HMBPP) into a mixture of isopentenyl diphosphate (IPP) and dimethylallyl diphosphate (DMAPP). Acts in the terminal step of the DOXP/MEP pathway for isoprenoid precursor biosynthesis. The protein is 4-hydroxy-3-methylbut-2-enyl diphosphate reductase of Francisella tularensis subsp. holarctica (strain LVS).